The primary structure comprises 397 residues: N-acetyllactosaminide beta-1,3-N-acetylglucosaminyltransferase 2 (397 aa).

Topologically, residues 1-7 (MSVGRRR) are cytoplasmic. Residues 8 to 28 (VKLLGILMMANVFIYLIVEVS) form a helical; Signal-anchor for type II membrane protein membrane-spanning segment. Topologically, residues 29 to 325 (KNSSQDKNGK…ALRLYSATSR (297 aa)) are lumenal. N-linked (GlcNAc...) asparagine glycosylation is found at N30, N79, N89, N127, N173, and N219.

The protein belongs to the glycosyltransferase 31 family. In terms of assembly, interacts with B3GNT8; this interaction greatly increases B3GNT2 catalytic activity, independently of B3GNT8 enzymatic activity. It depends on Mn(2+) as a cofactor. Expressed in heart, brain, lung, kidney and testis and, to a lesser extent, in liver and skeletal muscle. No expression in spleen.

The protein resides in the golgi apparatus membrane. The enzyme catalyses a beta-D-galactosyl-(1-&gt;4)-N-acetyl-beta-D-glucosaminyl derivative + UDP-N-acetyl-alpha-D-glucosamine = an N-acetyl-beta-D-glucosaminyl-(1-&gt;3)-beta-D-galactosyl-(1-&gt;4)-N-acetyl-beta-D-glucosaminyl derivative + UDP + H(+). Its pathway is protein modification; protein glycosylation. In terms of biological role, beta-1,3-N-acetylglucosaminyltransferase involved in the synthesis of poly-N-acetyllactosamine. Catalyzes the initiation and elongation of poly-N-acetyllactosamine chains. Probably constitutes the main polylactosamine synthase. The protein is N-acetyllactosaminide beta-1,3-N-acetylglucosaminyltransferase 2 (B3GNT2) of Mus musculus (Mouse).